The primary structure comprises 571 residues: Proline--tRNA ligase (571 aa).

The protein belongs to the class-II aminoacyl-tRNA synthetase family. ProS type 1 subfamily. In terms of assembly, homodimer.

The protein resides in the cytoplasm. The enzyme catalyses tRNA(Pro) + L-proline + ATP = L-prolyl-tRNA(Pro) + AMP + diphosphate. In terms of biological role, catalyzes the attachment of proline to tRNA(Pro) in a two-step reaction: proline is first activated by ATP to form Pro-AMP and then transferred to the acceptor end of tRNA(Pro). As ProRS can inadvertently accommodate and process non-cognate amino acids such as alanine and cysteine, to avoid such errors it has two additional distinct editing activities against alanine. One activity is designated as 'pretransfer' editing and involves the tRNA(Pro)-independent hydrolysis of activated Ala-AMP. The other activity is designated 'posttransfer' editing and involves deacylation of mischarged Ala-tRNA(Pro). The misacylated Cys-tRNA(Pro) is not edited by ProRS. The protein is Proline--tRNA ligase of Actinobacillus pleuropneumoniae serotype 5b (strain L20).